Reading from the N-terminus, the 461-residue chain is Aspartyl/glutamyl-tRNA(Asn/Gln) amidotransferase subunit B (461 aa).

This sequence belongs to the GatB/GatE family. GatB subfamily. In terms of assembly, heterotrimer of A, B and C subunits.

The enzyme catalyses L-glutamyl-tRNA(Gln) + L-glutamine + ATP + H2O = L-glutaminyl-tRNA(Gln) + L-glutamate + ADP + phosphate + H(+). It catalyses the reaction L-aspartyl-tRNA(Asn) + L-glutamine + ATP + H2O = L-asparaginyl-tRNA(Asn) + L-glutamate + ADP + phosphate + 2 H(+). Allows the formation of correctly charged Asn-tRNA(Asn) or Gln-tRNA(Gln) through the transamidation of misacylated Asp-tRNA(Asn) or Glu-tRNA(Gln) in organisms which lack either or both of asparaginyl-tRNA or glutaminyl-tRNA synthetases. The reaction takes place in the presence of glutamine and ATP through an activated phospho-Asp-tRNA(Asn) or phospho-Glu-tRNA(Gln). The protein is Aspartyl/glutamyl-tRNA(Asn/Gln) amidotransferase subunit B of Methanopyrus kandleri (strain AV19 / DSM 6324 / JCM 9639 / NBRC 100938).